We begin with the raw amino-acid sequence, 91 residues long: MEAALEQHLEDTMKNPSIVGVLCTDSQGLSLGCCGSLSDKHAGVISILPQYAAKLTSDPTDVPVVCLESDNGIVMIQKHDHLTVAVHKVTS.

This sequence belongs to the LAMTOR5 family. In terms of assembly, part of the Ragulator complex composed of lamtor1, lamtor2, lamtor3, lamtor4 and lamtor5. The Ragulator complex interacts with slc38a9; the probable amino acid sensor. Component of the lysosomal folliculin complex (LFC).

Its subcellular location is the cytoplasm. It localises to the lysosome. Functionally, as part of the Ragulator complex it is involved in amino acid sensing and activation of mTORC1, a signaling complex promoting cell growth in response to growth factors, energy levels, and amino acids. Activated by amino acids through a mechanism involving the lysosomal V-ATPase, the Ragulator plays a dual role for the small GTPases Rag (RagA/RRAGA, RagB/RRAGB, RagC/RRAGC and/or RagD/RRAGD): it (1) acts as a guanine nucleotide exchange factor (GEF), activating the small GTPases Rag and (2) mediates recruitment of Rag GTPases to the lysosome membrane. Activated Ragulator and Rag GTPases function as a scaffold recruiting mTORC1 to lysosomes where it is in turn activated. In Xenopus tropicalis (Western clawed frog), this protein is Ragulator complex protein LAMTOR5 (lamtor5).